We begin with the raw amino-acid sequence, 644 residues long: Leucine-rich repeat protein soc-2 homolog (644 aa).

Over residues 1–19 (MNLCSSGATASTTSLSSTG) the composition is skewed to low complexity. Disordered regions lie at residues 1–60 (MNLC…APTL) and 82–150 (NSPA…IQAD). Composition is skewed to gly residues over residues 26–50 (GVPGGGAEGGGGDGGSGNSGGGGKA) and 87–96 (GAGGASGFTG). The segment covering 99–117 (QQPTGSNGHSHLHNENNAN) has biased composition (polar residues). 20 LRR repeats span residues 164-185 (GIKRLDLSKSSITVIPSTVKEC), 187-208 (HLTELYLYSNKIGQLPPEIGCL), 210-231 (SLRNLALNENSLTSLPESLQNC), 233-254 (QLKVLDLRHNKLAEIPPVIYRL), 256-277 (SLTTLYLRFNRITAVADDLRQL), 279-300 (NLTMLSLRENKIRELGSAIGAL), 302-323 (NLTTLDVSHNHLEHLPEDIGNC), 325-346 (NLSALDLQHNELLDIPDSIGNL), 348-370 (SLVRLGMRYNRLNSVPATLKNCK), 371-392 (SMDEFNVEGNGITQLPDGMLAS), 395-416 (GLTTITLSRNQFASYPTGGPAQ), 419-440 (NVYSINLEHNRIDKIPYGIFSR), 443-464 (GLTKLNMKENMLTALPLDIGTW), 466-487 (NMVELNLATNALQKLPDDIMNL), 489-510 (NLEILILSNNMLKKIPNTIGNL), 512-533 (RLRILDLEENRIEVLPHEIGLL), 535-556 (ELQRLILQTNQITMLPRSIGHL), 558-579 (NLTHLSVSENNLQFLPEEIGSL), 581-603 (SLENLYINQNPGLEKLPFELALC), and 605-626 (NLKYLNIDKCPLSTIPPEIQAG).

The protein belongs to the SHOC2 family.

In terms of biological role, acts as a Ras effector and participates in MAPK pathway activation. Probably acts as a regulatory subunit of protein phosphatase that specifically dephosphorylates Raf kinase and stimulate Raf activity at specialized signaling complexes upon Ras activation. This Drosophila erecta (Fruit fly) protein is Leucine-rich repeat protein soc-2 homolog (Sur-8).